The primary structure comprises 154 residues: Myoglobin (154 aa).

One can recognise a Globin domain in the interval 2–148; the sequence is GLSDGEWQLV…FRNDIAAKYK (147 aa). The residue at position 4 (Ser4) is a Phosphoserine. His65 contributes to the nitrite binding site. His65 lines the O2 pocket. Thr68 is subject to Phosphothreonine. Residue His94 coordinates heme b.

This sequence belongs to the globin family. As to quaternary structure, monomeric.

It is found in the cytoplasm. Its subcellular location is the sarcoplasm. The catalysed reaction is Fe(III)-heme b-[protein] + nitric oxide + H2O = Fe(II)-heme b-[protein] + nitrite + 2 H(+). It catalyses the reaction H2O2 + AH2 = A + 2 H2O. In terms of biological role, monomeric heme protein which primary function is to store oxygen and facilitate its diffusion within muscle tissues. Reversibly binds oxygen through a pentacoordinated heme iron and enables its timely and efficient release as needed during periods of heightened demand. Depending on the oxidative conditions of tissues and cells, and in addition to its ability to bind oxygen, it also has a nitrite reductase activity whereby it regulates the production of bioactive nitric oxide. Under stress conditions, like hypoxia and anoxia, it also protects cells against reactive oxygen species thanks to its pseudoperoxidase activity. This chain is Myoglobin (MB), found in Vulpes chama (Cape fox).